The sequence spans 205 residues: Cytochrome c biogenesis ATP-binding export protein CcmA 2 (205 aa).

Residues 2-205 enclose the ABC transporter domain; that stretch reads LEARDLHCER…LALTGGEAGL (204 aa). 34–41 contacts ATP; it reads GGNGAGKT.

Belongs to the ABC transporter superfamily. CcmA exporter (TC 3.A.1.107) family. As to quaternary structure, the complex is composed of two ATP-binding proteins (CcmA) and two transmembrane proteins (CcmB).

It is found in the cell inner membrane. It catalyses the reaction heme b(in) + ATP + H2O = heme b(out) + ADP + phosphate + H(+). In terms of biological role, part of the ABC transporter complex CcmAB involved in the biogenesis of c-type cytochromes; once thought to export heme, this seems not to be the case, but its exact role is uncertain. Responsible for energy coupling to the transport system. The sequence is that of Cytochrome c biogenesis ATP-binding export protein CcmA 2 from Salmonella paratyphi A (strain ATCC 9150 / SARB42).